We begin with the raw amino-acid sequence, 399 residues long: S-adenosylmethionine synthase (399 aa).

An ATP-binding site is contributed by histidine 16. Aspartate 18 is a binding site for Mg(2+). Glutamate 44 contributes to the K(+) binding site. 2 residues coordinate L-methionine: glutamate 57 and glutamine 100. The tract at residues 100-110 (QSSDIAQGVNE) is flexible loop. ATP is bound by residues 177–179 (DAK), 244–245 (RF), aspartate 253, 259–260 (RK), alanine 276, and lysine 280. Position 253 (aspartate 253) interacts with L-methionine. Residue lysine 284 participates in L-methionine binding.

Belongs to the AdoMet synthase family. Homotetramer; dimer of dimers. It depends on Mg(2+) as a cofactor. The cofactor is K(+).

It is found in the cytoplasm. The catalysed reaction is L-methionine + ATP + H2O = S-adenosyl-L-methionine + phosphate + diphosphate. The protein operates within amino-acid biosynthesis; S-adenosyl-L-methionine biosynthesis; S-adenosyl-L-methionine from L-methionine: step 1/1. Its function is as follows. Catalyzes the formation of S-adenosylmethionine (AdoMet) from methionine and ATP. The overall synthetic reaction is composed of two sequential steps, AdoMet formation and the subsequent tripolyphosphate hydrolysis which occurs prior to release of AdoMet from the enzyme. This Lactococcus lactis subsp. lactis (strain IL1403) (Streptococcus lactis) protein is S-adenosylmethionine synthase.